Reading from the N-terminus, the 213-residue chain is Immunoglobulin lambda-like polypeptide 1 (213 aa).

An N-terminal signal peptide occupies residues 1–37 (MRPGTGQGGLEAPGEPGPNLRQRWPLLLLGLAVVTHG). Residues 97-108 (VFGSGTQLTVLS) are j region. The c region stretch occupies residues 109–213 (QPKATPSVTL…EKTVAPAECS (105 aa)). Positions 114–208 (PSVTLFPPSS…EGSTVEKTVA (95 aa)) constitute an Ig-like C1-type domain. Cysteines 135 and 194 form a disulfide.

In terms of assembly, associates non-covalently with VPREB1. Interacts with SYNV1/HRD1 (via N-terminus); this interaction leads to increased IGLL1 ubiquitination and degradation in pre-B cells, possibly through a lysosomal, not proteasomal, pathway. In terms of tissue distribution, expressed only in pre-B-cells and a special B-cell line (which is surface Ig negative).

It is found in the endoplasmic reticulum. The protein resides in the secreted. Functionally, critical for B-cell development. In Homo sapiens (Human), this protein is Immunoglobulin lambda-like polypeptide 1 (IGLL1).